A 569-amino-acid polypeptide reads, in one-letter code: Glucose-6-phosphate isomerase, cytosolic 2A (569 aa).

Glu-360 functions as the Proton donor in the catalytic mechanism. Catalysis depends on residues His-391 and Lys-516.

It belongs to the GPI family. In terms of assembly, homodimer.

The protein localises to the cytoplasm. It catalyses the reaction alpha-D-glucose 6-phosphate = beta-D-fructose 6-phosphate. The protein operates within carbohydrate degradation; glycolysis; D-glyceraldehyde 3-phosphate and glycerone phosphate from D-glucose: step 2/4. The chain is Glucose-6-phosphate isomerase, cytosolic 2A (PGIC2-A) from Clarkia lewisii (Farewell-to-spring).